A 267-amino-acid chain; its full sequence is Hydroxypyruvate/pyruvate aldolase Bphyt_5830 (267 aa).

Residue His48 is the Proton acceptor of the active site. Residues Glu152 and Asp178 each coordinate a divalent metal cation.

It belongs to the HpcH/HpaI aldolase family. Requires a divalent metal cation as cofactor.

The catalysed reaction is D-glyceraldehyde + 3-hydroxypyruvate = 2-dehydro-D-galactonate. It catalyses the reaction D-glyceraldehyde + 3-hydroxypyruvate = (3R,4S,5R)-3,4,5,6-tetrahydroxy-2-oxohexanoate. The enzyme catalyses D-glyceraldehyde + pyruvate = 2-dehydro-3-deoxy-L-galactonate. Aldolase which can catalyze in vitro the aldolisation reaction between hydroxypyruvate (HPA) or pyruvate (PA) and D-glyceraldehyde (D-GA). The condensation of hydroxypyruvate and D-glyceraldehyde produces 2-dehydro-D-galactonate as the major product and (3R,4S,5R)-3,4,5,6-tetrahydroxy-2-oxohexanoate. The condensation of pyruvate and D-glyceraldehyde produces 2-dehydro-3-deoxy-L-galactonate. This Paraburkholderia phytofirmans (strain DSM 17436 / LMG 22146 / PsJN) (Burkholderia phytofirmans) protein is Hydroxypyruvate/pyruvate aldolase Bphyt_5830.